A 131-amino-acid chain; its full sequence is Translation initiation factor 5A (131 aa).

A Hypusine modification is found at Lys-37.

Belongs to the eIF-5A family.

It is found in the cytoplasm. In terms of biological role, functions by promoting the formation of the first peptide bond. In Methanococcus maripaludis (strain C7 / ATCC BAA-1331), this protein is Translation initiation factor 5A (eIF5A).